A 129-amino-acid chain; its full sequence is Large ribosomal subunit protein bL19c (129 aa).

Belongs to the bacterial ribosomal protein bL19 family.

It is found in the plastid. The chain is Large ribosomal subunit protein bL19c from Prototheca wickerhamii.